The chain runs to 207 residues: Glycerol-3-phosphate acyltransferase (207 aa).

The next 5 helical transmembrane spans lie at 4–24 (VVATVIFALAAYLIGSISFAV), 58–78 (ILTLLGDAAKGGLAVWLAQWL), 86–106 (ETGIALVVIAVFLGHLFPVFH), 120–140 (ILLALNVWLGLATLATWLIIA), and 162–182 (VLMNGFDWIAGAVALMAVLLI).

Belongs to the PlsY family. Probably interacts with PlsX.

It localises to the cell inner membrane. The enzyme catalyses an acyl phosphate + sn-glycerol 3-phosphate = a 1-acyl-sn-glycero-3-phosphate + phosphate. Its pathway is lipid metabolism; phospholipid metabolism. Catalyzes the transfer of an acyl group from acyl-phosphate (acyl-PO(4)) to glycerol-3-phosphate (G3P) to form lysophosphatidic acid (LPA). This enzyme utilizes acyl-phosphate as fatty acyl donor, but not acyl-CoA or acyl-ACP. The sequence is that of Glycerol-3-phosphate acyltransferase from Ralstonia pickettii (strain 12J).